The following is a 380-amino-acid chain: Cytochrome b (380 aa).

Transmembrane regions (helical) follow at residues 34–54, 78–99, 114–134, and 179–199; these read FGSL…LLAM, WLIR…YLHI, WNTG…GYVL, and FFAL…IHLT. 2 residues coordinate heme b: H84 and H98. The heme b site is built by H183 and H197. H202 contacts a ubiquinone. Transmembrane regions (helical) follow at residues 227 to 247, 289 to 309, 321 to 341, and 348 to 368; these read LKDI…ALFS, LGGV…PFLH, ISQL…WVGS, and FIII…ILFP.

The protein belongs to the cytochrome b family. As to quaternary structure, the cytochrome bc1 complex contains 11 subunits: 3 respiratory subunits (MT-CYB, CYC1 and UQCRFS1), 2 core proteins (UQCRC1 and UQCRC2) and 6 low-molecular weight proteins (UQCRH/QCR6, UQCRB/QCR7, UQCRQ/QCR8, UQCR10/QCR9, UQCR11/QCR10 and a cleavage product of UQCRFS1). This cytochrome bc1 complex then forms a dimer. Heme b serves as cofactor.

It localises to the mitochondrion inner membrane. Functionally, component of the ubiquinol-cytochrome c reductase complex (complex III or cytochrome b-c1 complex) that is part of the mitochondrial respiratory chain. The b-c1 complex mediates electron transfer from ubiquinol to cytochrome c. Contributes to the generation of a proton gradient across the mitochondrial membrane that is then used for ATP synthesis. The chain is Cytochrome b (MT-CYB) from Puffinus opisthomelas (Black-vented shearwater).